The sequence spans 318 residues: tRNA dimethylallyltransferase (318 aa).

9-16 (GATASGKT) contributes to the ATP binding site. 11–16 (TASGKT) serves as a coordination point for substrate. Interaction with substrate tRNA stretches follow at residues 34-37 (DSAQ) and 158-162 (QRIIR).

This sequence belongs to the IPP transferase family. As to quaternary structure, monomer. Requires Mg(2+) as cofactor.

It carries out the reaction adenosine(37) in tRNA + dimethylallyl diphosphate = N(6)-dimethylallyladenosine(37) in tRNA + diphosphate. Catalyzes the transfer of a dimethylallyl group onto the adenine at position 37 in tRNAs that read codons beginning with uridine, leading to the formation of N6-(dimethylallyl)adenosine (i(6)A). The polypeptide is tRNA dimethylallyltransferase (Dichelobacter nodosus (strain VCS1703A)).